The chain runs to 235 residues: MKDELFKQNPKKQFEFDKSVASVFDDMINRSVPFYRENLELCGNLLAKILPTNASICDLGCSSANFLIFLANLRKDFKLFGVDNSASMLEVAKSKAKAYGLDISFFEANLCEFDFFICDVFVANYTMQFIRPPKRQELLDKIYKNLNSKGILIMSEKILYEDAFLSKNIIELYADYKEKQGYSKFEIAAKREALENVLIPYSQKENLNMLEKAGFKKIESIFKWANFETFIAFKD.

Residues tyrosine 35, 60-62 (GCS), 83-84 (DN), asparagine 124, and arginine 191 contribute to the S-adenosyl-L-methionine site.

This sequence belongs to the class I-like SAM-binding methyltransferase superfamily. Cx-SAM synthase family. In terms of assembly, homodimer.

The catalysed reaction is prephenate + S-adenosyl-L-methionine = carboxy-S-adenosyl-L-methionine + 3-phenylpyruvate + H2O. Its function is as follows. Catalyzes the conversion of S-adenosyl-L-methionine (SAM) to carboxy-S-adenosyl-L-methionine (Cx-SAM). The sequence is that of Carboxy-S-adenosyl-L-methionine synthase from Campylobacter jejuni subsp. doylei (strain ATCC BAA-1458 / RM4099 / 269.97).